A 384-amino-acid chain; its full sequence is Cytochrome b (384 aa).

Helical transmembrane passes span 32–52 (FGFL…FLAI), 76–98 (WLLR…IHIS), 113–133 (TWVV…MGYV), and 179–199 (FFSF…VHMA). H82 and H96 together coordinate heme b. 2 residues coordinate heme b: H183 and H197. H202 contacts a ubiquinone. Helical transmembrane passes span 225–245 (FIIK…LFVY), 289–309 (LGGV…PWIT), 321–341 (LYKK…WIGG), and 348–368 (YVVI…IFIP).

Belongs to the cytochrome b family. In terms of assembly, the main subunits of complex b-c1 are: cytochrome b, cytochrome c1 and the Rieske protein. Heme b serves as cofactor.

The protein resides in the mitochondrion inner membrane. Functionally, component of the ubiquinol-cytochrome c reductase complex (complex III or cytochrome b-c1 complex) that is part of the mitochondrial respiratory chain. The b-c1 complex mediates electron transfer from ubiquinol to cytochrome c. Contributes to the generation of a proton gradient across the mitochondrial membrane that is then used for ATP synthesis. In Cyanidium caldarium (Red alga), this protein is Cytochrome b (MT-CYB).